The sequence spans 498 residues: Glycerol kinase (498 aa).

Residue Thr12 participates in ADP binding. ATP is bound by residues Thr12, Thr13, and Ser14. Sn-glycerol 3-phosphate is bound at residue Thr12. An ADP-binding site is contributed by Arg16. Positions 82, 83, and 134 each coordinate sn-glycerol 3-phosphate. Glycerol-binding residues include Arg82, Glu83, and Tyr134. His230 is modified (phosphohistidine; by HPr). Residue Asp244 participates in sn-glycerol 3-phosphate binding. Residues Asp244 and Gln245 each coordinate glycerol. Positions 266 and 309 each coordinate ADP. 4 residues coordinate ATP: Thr266, Gly309, Gln313, and Gly410. 2 residues coordinate ADP: Gly410 and Asn414.

This sequence belongs to the FGGY kinase family. As to quaternary structure, homotetramer and homodimer (in equilibrium). The phosphoenolpyruvate-dependent sugar phosphotransferase system (PTS), including enzyme I, and histidine-containing protein (HPr) are required for the phosphorylation, which leads to the activation of the enzyme.

It carries out the reaction glycerol + ATP = sn-glycerol 3-phosphate + ADP + H(+). It functions in the pathway polyol metabolism; glycerol degradation via glycerol kinase pathway; sn-glycerol 3-phosphate from glycerol: step 1/1. Its activity is regulated as follows. Activated by phosphorylation and inhibited by fructose 1,6-bisphosphate (FBP). Its function is as follows. Key enzyme in the regulation of glycerol uptake and metabolism. Catalyzes the phosphorylation of glycerol to yield sn-glycerol 3-phosphate. The protein is Glycerol kinase of Staphylococcus aureus (strain bovine RF122 / ET3-1).